A 296-amino-acid chain; its full sequence is Ribosomal RNA small subunit methyltransferase A (296 aa).

N30, L32, G57, E78, D103, and N128 together coordinate S-adenosyl-L-methionine.

It belongs to the class I-like SAM-binding methyltransferase superfamily. rRNA adenine N(6)-methyltransferase family. RsmA subfamily.

The protein localises to the cytoplasm. It carries out the reaction adenosine(1518)/adenosine(1519) in 16S rRNA + 4 S-adenosyl-L-methionine = N(6)-dimethyladenosine(1518)/N(6)-dimethyladenosine(1519) in 16S rRNA + 4 S-adenosyl-L-homocysteine + 4 H(+). In terms of biological role, specifically dimethylates two adjacent adenosines (A1518 and A1519) in the loop of a conserved hairpin near the 3'-end of 16S rRNA in the 30S particle. May play a critical role in biogenesis of 30S subunits. In Macrococcus caseolyticus (strain JCSC5402) (Macrococcoides caseolyticum), this protein is Ribosomal RNA small subunit methyltransferase A.